The chain runs to 668 residues: Probable potassium transport system protein Kup (668 aa).

The next 12 membrane-spanning stretches (helical) occupy residues 17 to 37 (GILVAMGVVYGDIGTSPLYVM), 59 to 79 (VSLIFWTLTILTTIKYVVIAL), 104 to 124 (IIPAMIGGAALLADGVLTPAV), 148 to 168 (TIIVVITLTIILILFSVQRFG), 175 to 195 (AFGPIMFLWFTFLGIIGLMNF), 221 to 241 (LGLFILGNIFLATTGAEALYS), 256 to 276 (PYIKICLILNYLGQAAWLLTV), 299 to 319 (ILVFGVVFATIAAVIASQALI), 350 to 370 (MYIPAVNLILWLACSAIVLAF), 380 to 400 (YGLSITITMLMTTILLLFYLL), 403 to 423 (IPAWSAYLISLFFAAIEVVFF), and 430 to 450 (FFHGGYVAVGMAVFLLCIMII).

This sequence belongs to the HAK/KUP transporter (TC 2.A.72) family.

It is found in the cell membrane. The catalysed reaction is K(+)(in) + H(+)(in) = K(+)(out) + H(+)(out). In terms of biological role, transport of potassium into the cell. Likely operates as a K(+):H(+) symporter. This chain is Probable potassium transport system protein Kup, found in Enterococcus faecalis (strain ATCC 700802 / V583).